Reading from the N-terminus, the 104-residue chain is Large ribosomal subunit protein uL24 (104 aa).

It belongs to the universal ribosomal protein uL24 family. Part of the 50S ribosomal subunit.

In terms of biological role, one of two assembly initiator proteins, it binds directly to the 5'-end of the 23S rRNA, where it nucleates assembly of the 50S subunit. Functionally, one of the proteins that surrounds the polypeptide exit tunnel on the outside of the subunit. The protein is Large ribosomal subunit protein uL24 of Afipia carboxidovorans (strain ATCC 49405 / DSM 1227 / KCTC 32145 / OM5) (Oligotropha carboxidovorans).